Consider the following 469-residue polypeptide: Probable NADPH:adrenodoxin oxidoreductase, mitochondrial (469 aa).

The transit peptide at 1–38 (MLSRFIKRTYSTQTSSPVVGIIGSGPAAFYTAHRLLRN) directs the protein to the mitochondrion. Residues Ala-27, Glu-48, Leu-56, and Val-92 each contribute to the FAD site. Residues 164–167 (HGNV), 208–209 (RR), and Glu-220 contribute to the NADP(+) site. Residues Trp-375 and 382–384 (GVI) contribute to the FAD site. Gly-382 serves as a coordination point for NADP(+).

It belongs to the ferredoxin--NADP reductase type 1 family. FAD serves as cofactor.

It localises to the mitochondrion inner membrane. The enzyme catalyses 2 reduced [adrenodoxin] + NADP(+) + H(+) = 2 oxidized [adrenodoxin] + NADPH. In terms of biological role, adrenodoxin reductase transfers electrons from NADPH to adrenodoxin, which is involved in heme A biosynthesis and in iron-sulfur cluster assembly. Involved in the electron transfer to heme A synthase etp1(cd), a heme protein that catalyzes the conversion of heme O to heme A. Required for the de novo synthesis of Fe-S clusters on iron sulfur cluster assembly protein isu1. Involved in electron delivery for Fe-S cluster synthesis. Essential for coenzyme Q biosynthesis. May be involved in the electron transfer required for the hydroxylation reaction performed by coq6. May play a role in cellular and mitochondrial iron homeostasis. This is Probable NADPH:adrenodoxin oxidoreductase, mitochondrial (arh1) from Schizosaccharomyces pombe (strain 972 / ATCC 24843) (Fission yeast).